We begin with the raw amino-acid sequence, 234 residues long: Large ribosomal subunit protein uL1 (234 aa).

Belongs to the universal ribosomal protein uL1 family. As to quaternary structure, part of the 50S ribosomal subunit.

Functionally, binds directly to 23S rRNA. The L1 stalk is quite mobile in the ribosome, and is involved in E site tRNA release. In terms of biological role, protein L1 is also a translational repressor protein, it controls the translation of the L11 operon by binding to its mRNA. The protein is Large ribosomal subunit protein uL1 of Sodalis glossinidius (strain morsitans).